A 902-amino-acid chain; its full sequence is Nitrate reductase [NADPH] (902 aa).

Cys182 lines the Mo-molybdopterin pocket. A Cytochrome b5 heme-binding domain is found at 537-612; sequence LPLIFADEVA…LKKYCIGRCS (76 aa). 2 residues coordinate heme: His572 and His595. One can recognise an FAD-binding FR-type domain in the interval 637–751; it reads RTKVPIVLIS…KGPLGHFTYY (115 aa). FAD contacts are provided by residues 689–692, 708–712, Phe713, 725–727, and Thr778; these read RAYT, LIKVY, and LFS. An NADP(+)-binding site is contributed by 872 to 879; that stretch reads CMCGPEGM.

The protein belongs to the nitrate reductase family. As to quaternary structure, homodimer. Requires FAD as cofactor. Heme is required as a cofactor. The cofactor is Mo-molybdopterin.

It carries out the reaction nitrite + NADP(+) + H2O = nitrate + NADPH + H(+). In terms of biological role, nitrate reductase is a key enzyme involved in the first step of nitrate assimilation in plants, fungi and bacteria. This is Nitrate reductase [NADPH] (NIAA) from Phytophthora infestans (Potato late blight agent).